A 352-amino-acid polypeptide reads, in one-letter code: MVFRIASSPYTHNQRQTSRIMLLVLLAAVPGIAAQLWFFGWGTLVQILLASVSALLAEALVLKLRKQSVAATLKDNSALLTGLLLAVSIPPLAPWWMVVLGTVFAVIIAKQLYGGLGQNPFNPAMIGYVVLLISFPVQMTSWLPPHEIAVNIPGFIDAIQVIFSGHTASGGDMNTLRLGIDGISQATPLDTFKTSVRAGHSVEQIMQYPIYSGILAGAGWQWVNLAWLAGGVWLLWQKAIRWHIPLSFLVTLALCATLGWLFSPETLAAPQIHLLSGATMLGAFFILTDPVTASTTNRGRLIFGALAGLLVWLIRSFGGYPDGVAFAVLLANITVPLIDYYTRPRVYGHRKG.

The next 5 membrane-spanning stretches (helical) occupy residues 20-40, 42-62, 78-109, 123-143, and 148-168; these read IMLLVLLAAVPGIAAQLWFFG, GTLVQILLASVSALLAEALVL, ALLTGLLLAVSIPPLAPWWMVVLGTVFAVIIA, PAMIGYVVLLISFPVQMTSWL, and IAVNIPGFIDAIQVIFSGHTA. Thr187 is modified (FMN phosphoryl threonine). Helical transmembrane passes span 214–234, 242–262, 267–287, 301–321, and 322–342; these read ILAGAGWQWVNLAWLAGGVWL, WHIPLSFLVTLALCATLGWLF, LAAPQIHLLSGATMLGAFFIL, LIFGALAGLLVWLIRSFGGYP, and DGVAFAVLLANITVPLIDYYT.

Belongs to the NqrB/RnfD family. The complex is composed of six subunits: RsxA, RsxB, RsxC, RsxD, RsxE and RsxG. FMN serves as cofactor.

The protein resides in the cell inner membrane. Its function is as follows. Part of a membrane-bound complex that couples electron transfer with translocation of ions across the membrane. Required to maintain the reduced state of SoxR. The sequence is that of Ion-translocating oxidoreductase complex subunit D from Escherichia coli O157:H7.